The following is a 310-amino-acid chain: Junctional adhesion molecule C (310 aa).

An N-terminal signal peptide occupies residues 1–29 (MALSRRLRLRLYARLPDFFLLLLFRGCMI). The Extracellular segment spans residues 30 to 241 (EAVNLKSSNR…GQDMEVYDLN (212 aa)). The Ig-like V-type domain occupies 35 to 127 (KSSNRNPVVH…VALNDRKEVD (93 aa)). 2 cysteine pairs are disulfide-bonded: C53-C115 and C160-C219. N-linked (GlcNAc...) asparagine glycans are attached at residues N104 and N192. The Ig-like C2-type domain occupies 139-236 (PVTPVCRIPA…AARCEGQDME (98 aa)). The helical transmembrane segment at 242–262 (IAGIIGGVLVVLIVLAVITMG) threads the bilayer. The Cytoplasmic segment spans residues 263–310 (ICCAYRRGCFISSKQDGESYKSPGKHDGVNYIRTSEEGDFRHKSSFVI). 2 S-palmitoyl cysteine lipidation sites follow: C264 and C265.

This sequence belongs to the immunoglobulin superfamily. As to quaternary structure, interacts with ITGAM. Interacts with GORASP2. In terms of processing, proteolytically cleaved from endothelial cells surface into a soluble form by ADAM10 and ADAM17; the release of soluble JAM3 is increased by pro-inflammatory factors. N-glycosylated. Post-translationally, S-palmitoylated by ZDHHC7. S-palmitoylation promotes expression at tight junctions. Colocalizes with Jam2 near the lumen of seminiferous tubulues. Detected at junctional plaques that correspond to cell-cell contacts between spermatids and Sertoli cells. Detected on endothelial cells, in brain vessels and kidney glomeruli (at protein level). Detected in heart, lung, liver, kidney, testis, thymus, lymph node and Peyer patch. Endothelial cells.

It localises to the cell membrane. The protein resides in the cell junction. The protein localises to the desmosome. Its subcellular location is the tight junction. It is found in the secreted. Its function is as follows. Junctional adhesion protein that mediates heterotypic cell-cell interactions with its cognate receptor JAM2 to regulate different cellular processes. Plays a role in homing and mobilization of hematopoietic stem and progenitor cells within the bone marrow. At the surface of bone marrow stromal cells, it contributes to the retention of the hematopoietic stem and progenitor cells expressing JAM3. Plays a central role in leukocytes extravasation by facilitating transmigration through the endothelium. Plays a role in spermatogenesis where JAM2 and JAM3, which are respectively expressed by Sertoli and germ cells, mediate an interaction between both cell types and play an essential role in the anchorage of germ cells onto Sertoli cells and the assembly of cell polarity complexes during spermatid differentiation. Also functions as a counter-receptor for ITGAM, mediating leukocyte-platelet interactions and is involved in the regulation of transepithelial migration of polymorphonuclear neutrophils (PMN). Plays a role in angiogenesis. Plays a role in the regulation of cell migration. During myogenesis, it is involved in myocyte fusion. In terms of biological role, promotes chemotaxis of vascular endothelial cells and stimulates angiogenesis. This chain is Junctional adhesion molecule C (Jam3), found in Mus musculus (Mouse).